Consider the following 734-residue polypeptide: Photosystem I P700 chlorophyll a apoprotein A2 (734 aa).

Transmembrane regions (helical) follow at residues 46-69 (IFAS…FHVA), 135-158 (LYFG…LHLQ), 175-199 (LNHH…HVAI), 273-291 (IAHH…GHMY), 330-353 (LHMQ…QHMY), 369-395 (AALY…IFFV), 417-439 (AIIS…LYIH), and 517-535 (FLVH…LILV). [4Fe-4S] cluster contacts are provided by Cys559 and Cys568. Transmembrane regions (helical) follow at residues 575-596 (AFYL…YWHW) and 643-665 (QAVW…MFLI). Chlorophyll a-binding residues include His654, Met662, and Tyr670. Phylloquinone is bound at residue Trp671. Residues 707-727 (LVGLAHFTVGFIFTFAPFVIA) traverse the membrane as a helical segment.

This sequence belongs to the PsaA/PsaB family. As to quaternary structure, the PsaA/B heterodimer binds the P700 chlorophyll special pair and subsequent electron acceptors. PSI consists of a core antenna complex that captures photons, and an electron transfer chain that converts photonic excitation into a charge separation. The eukaryotic PSI reaction center is composed of at least 11 subunits. It depends on P700 is a chlorophyll a/chlorophyll a' dimer, A0 is one or more chlorophyll a, A1 is one or both phylloquinones and FX is a shared 4Fe-4S iron-sulfur center. as a cofactor.

The protein localises to the plastid. The protein resides in the chloroplast thylakoid membrane. The catalysed reaction is reduced [plastocyanin] + hnu + oxidized [2Fe-2S]-[ferredoxin] = oxidized [plastocyanin] + reduced [2Fe-2S]-[ferredoxin]. In terms of biological role, psaA and PsaB bind P700, the primary electron donor of photosystem I (PSI), as well as the electron acceptors A0, A1 and FX. PSI is a plastocyanin/cytochrome c6-ferredoxin oxidoreductase, converting photonic excitation into a charge separation, which transfers an electron from the donor P700 chlorophyll pair to the spectroscopically characterized acceptors A0, A1, FX, FA and FB in turn. Oxidized P700 is reduced on the lumenal side of the thylakoid membrane by plastocyanin or cytochrome c6. The sequence is that of Photosystem I P700 chlorophyll a apoprotein A2 from Emiliania huxleyi (Coccolithophore).